The chain runs to 416 residues: Serine hydroxymethyltransferase (416 aa).

(6S)-5,6,7,8-tetrahydrofolate contacts are provided by residues Leu-117 and 121–123 (GHL). Lys-225 is modified (N6-(pyridoxal phosphate)lysine). (6S)-5,6,7,8-tetrahydrofolate is bound at residue 351–353 (SPF).

This sequence belongs to the SHMT family. In terms of assembly, homodimer. The cofactor is pyridoxal 5'-phosphate.

It localises to the cytoplasm. The catalysed reaction is (6R)-5,10-methylene-5,6,7,8-tetrahydrofolate + glycine + H2O = (6S)-5,6,7,8-tetrahydrofolate + L-serine. It participates in one-carbon metabolism; tetrahydrofolate interconversion. The protein operates within amino-acid biosynthesis; glycine biosynthesis; glycine from L-serine: step 1/1. In terms of biological role, catalyzes the reversible interconversion of serine and glycine with tetrahydrofolate (THF) serving as the one-carbon carrier. This reaction serves as the major source of one-carbon groups required for the biosynthesis of purines, thymidylate, methionine, and other important biomolecules. Also exhibits THF-independent aldolase activity toward beta-hydroxyamino acids, producing glycine and aldehydes, via a retro-aldol mechanism. This Blochmanniella pennsylvanica (strain BPEN) protein is Serine hydroxymethyltransferase.